The following is a 263-amino-acid chain: Rhomboid-like protease 3 (263 aa).

A run of 6 helical transmembrane segments spans residues 37 to 57 (KSIVWITVAQIIMYIISCVLS), 86 to 106 (VVTPLFLHATILHLVLNLVFI), 121 to 141 (KFLVTYFLSAIVGNLLSMLMQ), 142 to 162 (PWALSVGASTAGFGIIGGMAA), 189 to 209 (LIYFLSFGRTVDTFGHLGGFL), and 231 to 251 (VLFYGCSALCATILVVSPPLL). Ser-150 serves as the catalytic Nucleophile. The active site involves His-204.

This sequence belongs to the peptidase S54 family.

The protein resides in the membrane. The enzyme catalyses Cleaves type-1 transmembrane domains using a catalytic dyad composed of serine and histidine that are contributed by different transmembrane domains.. Its function is as follows. Serine protease involved in intramembrane proteolysis and the subsequent release of polypeptides from their membrane anchors. The chain is Rhomboid-like protease 3 (ROM3) from Toxoplasma gondii.